Consider the following 429-residue polypeptide: Glutamate-1-semialdehyde 2,1-aminomutase (429 aa).

Lysine 266 is modified (N6-(pyridoxal phosphate)lysine).

The protein belongs to the class-III pyridoxal-phosphate-dependent aminotransferase family. HemL subfamily. The cofactor is pyridoxal 5'-phosphate.

It localises to the cytoplasm. It carries out the reaction (S)-4-amino-5-oxopentanoate = 5-aminolevulinate. It functions in the pathway porphyrin-containing compound metabolism; protoporphyrin-IX biosynthesis; 5-aminolevulinate from L-glutamyl-tRNA(Glu): step 2/2. This is Glutamate-1-semialdehyde 2,1-aminomutase (hemL) from Aeropyrum pernix (strain ATCC 700893 / DSM 11879 / JCM 9820 / NBRC 100138 / K1).